The sequence spans 211 residues: Uracil phosphoribosyltransferase (211 aa).

Residues arginine 78, arginine 103, and 130–138 (DPMLATGGT) each bind 5-phospho-alpha-D-ribose 1-diphosphate. Uracil contacts are provided by residues isoleucine 195 and 200 to 202 (GDA). Aspartate 201 is a binding site for 5-phospho-alpha-D-ribose 1-diphosphate.

It belongs to the UPRTase family. The cofactor is Mg(2+).

The enzyme catalyses UMP + diphosphate = 5-phospho-alpha-D-ribose 1-diphosphate + uracil. The protein operates within pyrimidine metabolism; UMP biosynthesis via salvage pathway; UMP from uracil: step 1/1. With respect to regulation, allosterically activated by GTP. Functionally, catalyzes the conversion of uracil and 5-phospho-alpha-D-ribose 1-diphosphate (PRPP) to UMP and diphosphate. The polypeptide is Uracil phosphoribosyltransferase (Streptomyces coelicolor (strain ATCC BAA-471 / A3(2) / M145)).